A 940-amino-acid chain; its full sequence is MLKLFTSSASRVHHLTPVSRVVGSSPVESPLFKALSQITGWNRRSTSLGHRAFFCSEPTNGEAAAEAETKAVESDSEVSDSKSSSAIVPTNPRPEDCLTVLALPVPHRPLFPGFYMPIYVKDPKVLAALQESRRRQAPYAGAFLLKDDPSADSSSSTDAEKNINELKGKELLNRLHEVGTLAQISSIQGDQVILVGHRRLRIKEMVSEEPLTVKVDHLKDNPFDMDDDVVKATSFEVISTLRDVLKTSSLWRDHVQTYTQHIGDFTYPRLADFGAAICGANRHQAQEVLEELDVHKRLRLTLELMKKEMEISKIQETIAKAIEEKISGEQRRYLLNEQLKAIKKELGVETDDKSALSAKFKERIEPNKEKIPAHVLQVIEEELTKLQLLEASSSEFNVTRNYLDWLTILPWGNYSNENFDVARAQTILDEDHYGLSDVKERILEFIAVGRLRGTSQGKIICLSGPPGVGKTSIGRSIARALNRKFFRFSVGGLADVAEIKGHRRTYVGAMPGKMVQCLKSVGTANPLVLIDEIDKLGRGHAGDPASALLELLDPEQNANFLDHYLDVTIDLSKVLFVCTANVIDMIPNPLLDRMEVISIAGYITDEKVHIARDYLEKTARGDCGVKPEQVEVSDAALLSLIENYCREAGVRNLQKQIEKIYRKIALKLVREGAVPEEPAVASDPEEAEIVADVGESIENHTVEENTVSSAEEPKEEAQTEKIAIETVMIDESNLADYVGKPVFHAEKLYEQTPVGVVMGLAWTSMGGSTLYIETTVVEEGEGKGGLNITGQLGDVMKESAQIAHTVARKIMLEKEPENQFFANSKLHLHVPAGATPKDGPSAGCTMITSLLSLATKKPVRKDLAMTGEVTLTGRILPIGGVKEKTIAARRSQIKTIIFPEANRRDFDELAENVKEGLNVHFVDDYGKIFELAFGYDKQED.

A mitochondrion-targeting transit peptide spans 1-61; that stretch reads MLKLFTSSAS…AFFCSEPTNG (61 aa). Positions 70–90 are disordered; sequence KAVESDSEVSDSKSSSAIVPT. Residue S74 is modified to Phosphoserine. Positions 100–309 constitute a Lon N-terminal domain; the sequence is VLALPVPHRP…LTLELMKKEM (210 aa). An ATP-binding site is contributed by 464-471; it reads GPPGVGKT. The 185-residue stretch at 751 to 935 folds into the Lon proteolytic domain; that stretch reads QTPVGVVMGL…GKIFELAFGY (185 aa). Residues S841 and K884 contribute to the active site.

This sequence belongs to the peptidase S16 family. In terms of assembly, homohexamer or homoheptamer. Organized in a ring with a central cavity.

The protein resides in the mitochondrion matrix. It carries out the reaction Hydrolysis of proteins in presence of ATP.. In terms of biological role, ATP-dependent serine protease that mediates the selective degradation of misfolded, unassembled or oxidatively damaged polypeptides as well as certain short-lived regulatory proteins in the mitochondrial matrix. May also have a chaperone function in the assembly of inner membrane protein complexes. Participates in the regulation of mitochondrial gene expression and in the maintenance of the integrity of the mitochondrial genome. Binds to mitochondrial DNA in a site-specific manner. The sequence is that of Lon protease homolog 1, mitochondrial (LON1) from Arabidopsis thaliana (Mouse-ear cress).